The following is a 134-amino-acid chain: Ribonuclease VapC1 (134 aa).

A PINc domain is found at 3–132 (YMLDTNIIIY…RITDLQWQDW (130 aa)). Mg(2+) is bound by residues Asp6 and Asp99.

The protein belongs to the PINc/VapC protein family. As to quaternary structure, forms a complex with VapB1. It depends on Mg(2+) as a cofactor.

In terms of biological role, toxic component of a type II toxin-antitoxin (TA) system. Upon expression in E.coli inhibits growth in liquid culture. Its toxic effect is neutralized by coexpression with antitoxin VapB1. Degrades RNA but not ss- or ds-DNA in vitro, degradation is inhibited by VapB1 antitoxin. In Haemophilus influenzae (strain R2866), this protein is Ribonuclease VapC1.